A 427-amino-acid polypeptide reads, in one-letter code: Glutamate-1-semialdehyde 2,1-aminomutase (427 aa).

K265 bears the N6-(pyridoxal phosphate)lysine mark.

The protein belongs to the class-III pyridoxal-phosphate-dependent aminotransferase family. HemL subfamily. As to quaternary structure, homodimer. Pyridoxal 5'-phosphate is required as a cofactor.

The protein resides in the cytoplasm. The enzyme catalyses (S)-4-amino-5-oxopentanoate = 5-aminolevulinate. It participates in porphyrin-containing compound metabolism; protoporphyrin-IX biosynthesis; 5-aminolevulinate from L-glutamyl-tRNA(Glu): step 2/2. The protein is Glutamate-1-semialdehyde 2,1-aminomutase of Pseudomonas fluorescens (strain Pf0-1).